The sequence spans 210 residues: Uracil phosphoribosyltransferase (210 aa).

5-phospho-alpha-D-ribose 1-diphosphate contacts are provided by residues arginine 78, arginine 103, and 130–138 (DPMLATGGS). Uracil contacts are provided by residues isoleucine 193 and 198-200 (GDA). Aspartate 199 contributes to the 5-phospho-alpha-D-ribose 1-diphosphate binding site.

It belongs to the UPRTase family. It depends on Mg(2+) as a cofactor.

It catalyses the reaction UMP + diphosphate = 5-phospho-alpha-D-ribose 1-diphosphate + uracil. It participates in pyrimidine metabolism; UMP biosynthesis via salvage pathway; UMP from uracil: step 1/1. With respect to regulation, allosterically activated by GTP. Its function is as follows. Catalyzes the conversion of uracil and 5-phospho-alpha-D-ribose 1-diphosphate (PRPP) to UMP and diphosphate. The polypeptide is Uracil phosphoribosyltransferase (Chromobacterium violaceum (strain ATCC 12472 / DSM 30191 / JCM 1249 / CCUG 213 / NBRC 12614 / NCIMB 9131 / NCTC 9757 / MK)).